We begin with the raw amino-acid sequence, 191 residues long: MYSGQNKIHKDKGVAPTEFEEQVTQALFDLENTNQELKSELKDLYINQAVQMDISGNRKAVVIYVPFRLRKAFRKIHLRLVRELEKKFSGKDVIFVATRRIMRPPKKGSAVQRPRNRTLTSVHEAMLEDVAYPAEIVGKRTRYRLDGTKIMKVFLDSKLKNDTEYKLETMVGVYRKLTGKDVVFEYPVIEA.

Residue Met1 is modified to N-acetylmethionine. Residues 17–50 (TEFEEQVTQALFDLENTNQELKSELKDLYINQAV) adopt a coiled-coil conformation.

This sequence belongs to the eukaryotic ribosomal protein eS7 family.

The protein is Small ribosomal subunit protein eS7y (RPS7B) of Arabidopsis thaliana (Mouse-ear cress).